The sequence spans 162 residues: ATP synthase subunit b (162 aa).

The chain crosses the membrane as a helical span at residues 16-36 (GISGGTIIYQLLMFIILLALL).

This sequence belongs to the ATPase B chain family. F-type ATPases have 2 components, F(1) - the catalytic core - and F(0) - the membrane proton channel. F(1) has five subunits: alpha(3), beta(3), gamma(1), delta(1), epsilon(1). F(0) has three main subunits: a(1), b(2) and c(10-14). The alpha and beta chains form an alternating ring which encloses part of the gamma chain. F(1) is attached to F(0) by a central stalk formed by the gamma and epsilon chains, while a peripheral stalk is formed by the delta and b chains.

It is found in the cell membrane. Its function is as follows. F(1)F(0) ATP synthase produces ATP from ADP in the presence of a proton or sodium gradient. F-type ATPases consist of two structural domains, F(1) containing the extramembraneous catalytic core and F(0) containing the membrane proton channel, linked together by a central stalk and a peripheral stalk. During catalysis, ATP synthesis in the catalytic domain of F(1) is coupled via a rotary mechanism of the central stalk subunits to proton translocation. In terms of biological role, component of the F(0) channel, it forms part of the peripheral stalk, linking F(1) to F(0). This chain is ATP synthase subunit b, found in Bacillus caldotenax.